A 350-amino-acid polypeptide reads, in one-letter code: S-adenosylmethionine:tRNA ribosyltransferase-isomerase (350 aa).

It belongs to the QueA family. In terms of assembly, monomer.

Its subcellular location is the cytoplasm. The enzyme catalyses 7-aminomethyl-7-carbaguanosine(34) in tRNA + S-adenosyl-L-methionine = epoxyqueuosine(34) in tRNA + adenine + L-methionine + 2 H(+). It functions in the pathway tRNA modification; tRNA-queuosine biosynthesis. In terms of biological role, transfers and isomerizes the ribose moiety from AdoMet to the 7-aminomethyl group of 7-deazaguanine (preQ1-tRNA) to give epoxyqueuosine (oQ-tRNA). The polypeptide is S-adenosylmethionine:tRNA ribosyltransferase-isomerase (Bacillus thuringiensis subsp. konkukian (strain 97-27)).